Reading from the N-terminus, the 216-residue chain is Elongation factor Ts (216 aa).

Residues 81 to 84 are involved in Mg(2+) ion dislocation from EF-Tu; that stretch reads TDFV.

This sequence belongs to the EF-Ts family.

Its subcellular location is the cytoplasm. Functionally, associates with the EF-Tu.GDP complex and induces the exchange of GDP to GTP. It remains bound to the aminoacyl-tRNA.EF-Tu.GTP complex up to the GTP hydrolysis stage on the ribosome. The protein is Elongation factor Ts of Citrifermentans bemidjiense (strain ATCC BAA-1014 / DSM 16622 / JCM 12645 / Bem) (Geobacter bemidjiensis).